The chain runs to 194 residues: ATP-dependent Clp protease proteolytic subunit 3 (194 aa).

Ser-96 functions as the Nucleophile in the catalytic mechanism. Residue His-121 is part of the active site.

The protein belongs to the peptidase S14 family. Fourteen ClpP subunits assemble into 2 heptameric rings which stack back to back to give a disk-like structure with a central cavity, resembling the structure of eukaryotic proteasomes.

The protein resides in the cytoplasm. It catalyses the reaction Hydrolysis of proteins to small peptides in the presence of ATP and magnesium. alpha-casein is the usual test substrate. In the absence of ATP, only oligopeptides shorter than five residues are hydrolyzed (such as succinyl-Leu-Tyr-|-NHMec, and Leu-Tyr-Leu-|-Tyr-Trp, in which cleavage of the -Tyr-|-Leu- and -Tyr-|-Trp bonds also occurs).. In terms of biological role, cleaves peptides in various proteins in a process that requires ATP hydrolysis. Has a chymotrypsin-like activity. Plays a major role in the degradation of misfolded proteins. This chain is ATP-dependent Clp protease proteolytic subunit 3, found in Prochlorococcus marinus (strain NATL2A).